We begin with the raw amino-acid sequence, 150 residues long: Putative antitoxin VapB45 (150 aa).

Residues 124–150 (AQRPVAAGRPRPRPQRPVSDRVSDQRR) form a disordered region. The span at 141-150 (VSDRVSDQRR) shows a compositional bias: basic and acidic residues.

The protein belongs to the phD/YefM antitoxin family.

Its function is as follows. Possibly the antitoxin component of a type II toxin-antitoxin (TA) system. Its cognate toxin is VapC45 (Potential). The polypeptide is Putative antitoxin VapB45 (vapB45) (Mycobacterium tuberculosis (strain CDC 1551 / Oshkosh)).